We begin with the raw amino-acid sequence, 87 residues long: U3-theraphotoxin-Hhn1l (87 aa).

The signal sequence occupies residues 1–24; sequence MVNMKASMFLTFAGLVLLFVVCYA. Residues 25 to 52 constitute a propeptide that is removed on maturation; the sequence is SESEEKEFPKEMLSSIFAVDNDFKQEER. Cystine bridges form between Cys-54-Cys-67, Cys-61-Cys-72, and Cys-66-Cys-79.

This sequence belongs to the neurotoxin 10 (Hwtx-1) family. 51 (Hntx-8) subfamily. Hntx-8 sub-subfamily. In terms of tissue distribution, expressed by the venom gland.

It localises to the secreted. Functionally, ion channel inhibitor. The protein is U3-theraphotoxin-Hhn1l of Cyriopagopus hainanus (Chinese bird spider).